We begin with the raw amino-acid sequence, 75 residues long: uncharacterized protein (75 aa).

2 4Fe-4S ferredoxin-type domains span residues 2 to 30 (SHTI…KGEG) and 37 to 68 (DWYW…KEEP). [3Fe-4S] cluster-binding residues include Cys-10 and Cys-16. Residues Cys-20, Cys-46, Cys-49, and Cys-52 each contribute to the [4Fe-4S] cluster site. Residue Cys-56 participates in [3Fe-4S] cluster binding.

It depends on [4Fe-4S] cluster as a cofactor. [3Fe-4S] cluster is required as a cofactor.

Its subcellular location is the plastid. It localises to the chloroplast. This is an uncharacterized protein from Porphyra purpurea (Red seaweed).